Reading from the N-terminus, the 338-residue chain is Phenylalanine--tRNA ligase alpha subunit (338 aa).

Residue E252 coordinates Mg(2+).

It belongs to the class-II aminoacyl-tRNA synthetase family. Phe-tRNA synthetase alpha subunit type 1 subfamily. Tetramer of two alpha and two beta subunits. Mg(2+) is required as a cofactor.

It is found in the cytoplasm. It catalyses the reaction tRNA(Phe) + L-phenylalanine + ATP = L-phenylalanyl-tRNA(Phe) + AMP + diphosphate + H(+). This chain is Phenylalanine--tRNA ligase alpha subunit, found in Pseudomonas fluorescens (strain ATCC BAA-477 / NRRL B-23932 / Pf-5).